The following is a 127-amino-acid chain: Apolipoprotein C-IV (127 aa).

Positions 1 to 27 (MSLLRNRLQDLPALCLCVLVLACIGAC) are cleaved as a signal peptide.

The protein belongs to the apolipoprotein C4 family.

Its subcellular location is the secreted. Functionally, may participate in lipoprotein metabolism. In Papio anubis (Olive baboon), this protein is Apolipoprotein C-IV (APOC4).